A 298-amino-acid polypeptide reads, in one-letter code: GTPase Era (298 aa).

Positions Lys3–Glu170 constitute an Era-type G domain. The segment at Gly11 to Ser18 is G1. Gly11 to Ser18 is a binding site for GTP. Residues Gln37 to Asn41 are G2. The tract at residues Asp58–Gly61 is G3. Residues Asp58–Ile62 and Asn120–Asp123 each bind GTP. The segment at Asn120 to Asp123 is G4. The tract at residues Ile149–Ala151 is G5. The 78-residue stretch at Leu201–Lys278 folds into the KH type-2 domain.

This sequence belongs to the TRAFAC class TrmE-Era-EngA-EngB-Septin-like GTPase superfamily. Era GTPase family. As to quaternary structure, monomer.

It localises to the cytoplasm. Its subcellular location is the cell membrane. An essential GTPase that binds both GDP and GTP, with rapid nucleotide exchange. Plays a role in 16S rRNA processing and 30S ribosomal subunit biogenesis and possibly also in cell cycle regulation and energy metabolism. The chain is GTPase Era from Clostridium beijerinckii (strain ATCC 51743 / NCIMB 8052) (Clostridium acetobutylicum).